Consider the following 453-residue polypeptide: Formimidoylglutamate deiminase (453 aa).

Zn(2+) contacts are provided by histidine 56 and histidine 58. Residues glutamine 61, arginine 82, tyrosine 121, histidine 206, and arginine 209 each coordinate N-formimidoyl-L-glutamate. Histidine 232 serves as a coordination point for Zn(2+). Glutamate 235 serves as a coordination point for N-formimidoyl-L-glutamate. Active-site proton acceptor residues include histidine 269 and aspartate 320. Aspartate 320 serves as a coordination point for Zn(2+).

This sequence belongs to the metallo-dependent hydrolases superfamily. Homodimer. Zn(2+) is required as a cofactor.

It catalyses the reaction N-formimidoyl-L-glutamate + H2O = N-formyl-L-glutamate + NH4(+). It participates in amino-acid degradation; L-histidine degradation into L-glutamate; L-glutamate from N-formimidoyl-L-glutamate (deiminase route): step 1/2. Inhibited by the metal chelator dipicolinate. Inhibited by N-formimino-L-aspartate and N-guanidino-L-glutaric acid. Catalyzes the hydrolysis of N-formimino-L-glutamate to N-formyl-L-glutamate and ammonia. The polypeptide is Formimidoylglutamate deiminase (Pseudomonas aeruginosa (strain ATCC 15692 / DSM 22644 / CIP 104116 / JCM 14847 / LMG 12228 / 1C / PRS 101 / PAO1)).